A 407-amino-acid polypeptide reads, in one-letter code: Arginine deiminase (407 aa).

Residue Cys397 is the Amidino-cysteine intermediate of the active site.

It belongs to the arginine deiminase family.

It is found in the cytoplasm. The catalysed reaction is L-arginine + H2O = L-citrulline + NH4(+). The protein operates within amino-acid degradation; L-arginine degradation via ADI pathway; carbamoyl phosphate from L-arginine: step 1/2. The sequence is that of Arginine deiminase from Escherichia coli O81 (strain ED1a).